A 105-amino-acid chain; its full sequence is Malonate decarboxylase acyl carrier protein (105 aa).

O-(phosphoribosyl dephospho-coenzyme A)serine is present on S28.

The protein belongs to the MdcC family. Covalently binds the prosthetic group of malonate decarboxylase.

Its subcellular location is the cytoplasm. Its function is as follows. Subunit of malonate decarboxylase, it is an acyl carrier protein to which acetyl and malonyl thioester residues are bound via a 2'-(5''-phosphoribosyl)-3'-dephospho-CoA prosthetic group and turn over during the catalytic mechanism. In Xanthomonas axonopodis pv. citri (strain 306), this protein is Malonate decarboxylase acyl carrier protein.